We begin with the raw amino-acid sequence, 715 residues long: Metastasis-associated protein MTA1 (715 aa).

Residues 1-164 (MAANMYRVGD…PQQKTLLADK (164 aa)) form the BAH domain. The region spanning 165-276 (GEIRVGNRYQ…KAISALVPQG (112 aa)) is the ELM2 domain. K182 participates in a covalent cross-link: Glycyl lysine isopeptide (Lys-Gly) (interchain with G-Cter in ubiquitin). An SANT domain is found at 283 to 335 (DEMEEWSASEANLFEEALEKYGKDFTDIQQDFLPWKSLTSIIEYYYMWKTTDR). Residue S386 is modified to Phosphoserine. Residues 393–420 (CESCYTTQSYQWYSWGPPNMQCRLCASC) form a GATA-type; atypical zinc finger. Residues 435 to 460 (RLDGERPGPNRSNMSPHGLPARSSGS) are disordered. Phosphoserine is present on residues S446 and S449. Residue K509 forms a Glycyl lysine isopeptide (Lys-Gly) (interchain with G-Cter in SUMO2 and SUMO3) linkage. A Phosphoserine modification is found at S522. The short motif at 545 to 552 (PRPPKPDP) is the SH3-binding element. Residue K549 forms a Glycyl lysine isopeptide (Lys-Gly) (interchain with G-Cter in SUMO2) linkage. Residue T564 is modified to Phosphothreonine. Residue S576 is modified to Phosphoserine. T578 is subject to Phosphothreonine. N6-acetyllysine; alternate is present on K626. A Glycyl lysine isopeptide (Lys-Gly) (interchain with G-Cter in ubiquitin); alternate cross-link involves residue K626. A Phosphoserine modification is found at S639. Positions 656 to 686 (DVFYMATEETRKIRKLLSSSETKRAARRPYK) are interaction with RBBP4. Residues 673–715 (SSSETKRAARRPYKPIALRQSQALPPRPPPPAPVNDEPIVIED) form a disordered region. Residues 696-705 (LPPRPPPPAP) carry the SH3-binding motif. The SUMO interaction motif 1 (SIM); crucial for efficient sumoylation signature appears at 711 to 715 (IVIED).

The protein belongs to the metastasis-associated protein family. Component of the nucleosome remodeling and deacetylase (NuRD) repressor complex, composed of core proteins MTA1, MTA2, MTA3, RBBP4, RBBP7, HDAC1, HDAC2, MBD2, MBD3, and peripherally associated proteins CDK2AP1, CDK2AP2, GATAD2A, GATAD2B, CHD3, CHD4 and CHD5. The exact stoichiometry of the NuRD complex is unknown, and some subunits such as MBD2 and MBD3, GATAD2A and GATAD2B, and CHD3, CHD4 and CHD5 define mutually exclusive NuRD complexes. Interacts with RBBP4; the interaction is direct. Interacts with BMAL1. Interacts with CLOCK. Interacts with COP1. Interacts with CSNK1G2 in the cytoplasm. Interacts with EP300. Interacts with HDAC2. Interacts with IFI16. Interacts with ITGB3BP/CENPR. Interacts with MBD3L2. Interacts with MDM2. Interacts with NACC2. Interacts with p53/TP53. Interacts with PIAS1. Interacts with PIAS3. Interacts with PIAS4. Interacts with PWWP2A. Interacts with PWWP2B. Interacts with SENP1. Interacts with SENP2. Interacts with SIX3; facilitates the binding of SIX3 to the core DNA motif of SIX3 promoter. Interacts with SUMO1. Interacts with SUMO2. Interacts with TFCP2L1; which is indispensable for TFCP2L1-mediated self-renewal-promoting effect and endoderm-inhibiting action. Interacts with TFAP2C. Interacts with TPR. Interacts with UBE2I/UBC9. Phosphorylation by CSNK1G2/CK1 triggered by estrogen enhances corepression of estrogen receptor (ER). Post-translationally, acetylation is essential for its transcriptional coactivator activity. In terms of processing, sumoylation positively regulates its transcriptional corepressor activity but does not affect the protein stability. Sumoylated preferentially by SUMO2 or SUMO3 than SUMO1. Sumoylation is enhanced by PIAS1/3/4 and preferentially sumoylated by SUMO2 in the presence of PIAS1/3/4. Desumoylated by SENP1. Ubiquitinated by COP1, which leads to proteasomal degradation. In terms of tissue distribution, widely expressed. High expression in brain, liver, kidney, and cardiac muscle, ovaries, adrenal glands and virgin mammary glands. Higher in tumors than in adjacent normal tissue from the same individual. Up-regulated in a wide variety of cancers including breast, liver, ovarian, and colorectal cancer and its expression levels are closely correlated with tumor aggressiveness and metastasis.

Its subcellular location is the nucleus. The protein localises to the cytoplasm. It localises to the nucleus envelope. It is found in the cytoskeleton. Its function is as follows. Transcriptional coregulator which can act as both a transcriptional corepressor and coactivator. Acts as a component of the histone deacetylase NuRD complex which participates in the remodeling of chromatin. In the NuRD complex, regulates transcription of its targets by modifying the acetylation status of the target chromatin and cofactor accessibility to the target DNA. In conjunction with other components of NuRD, acts as a transcriptional corepressor of BRCA1, ESR1, TFF1 and CDKN1A. Acts as a transcriptional coactivator of BCAS3, and SUMO2, independent of the NuRD complex. Stimulates the expression of WNT1 by inhibiting the expression of its transcriptional corepressor SIX3. Regulates p53-dependent and -independent DNA repair processes following genotoxic stress. Regulates the stability and function of p53/TP53 by inhibiting its ubiquitination by COP1 and MDM2 thereby regulating the p53-dependent DNA repair. Plays a role in the regulation of the circadian clock and is essential for the generation and maintenance of circadian rhythms under constant light and for normal entrainment of behavior to light-dark (LD) cycles. Positively regulates the CLOCK-BMAL1 heterodimer mediated transcriptional activation of its own transcription and the transcription of CRY1. Regulates deacetylation of BMAL1 by regulating SIRT1 expression, resulting in derepressing CRY1-mediated transcription repression. With TFCP2L1, promotes establishment and maintenance of pluripotency in embryonic stem cells (ESCs) and inhibits endoderm differentiation. In terms of biological role, binds to ESR1 and sequesters it in the cytoplasm and enhances its non-genomic responses. The protein is Metastasis-associated protein MTA1 (MTA1) of Homo sapiens (Human).